The primary structure comprises 103 residues: Small ribosomal subunit protein uS10 (103 aa).

It belongs to the universal ribosomal protein uS10 family. In terms of assembly, part of the 30S ribosomal subunit.

In terms of biological role, involved in the binding of tRNA to the ribosomes. This is Small ribosomal subunit protein uS10 from Polynucleobacter necessarius subsp. necessarius (strain STIR1).